The following is a 154-amino-acid chain: Protein X (154 aa).

The tract at residues 68–117 (PCALRFTSARCMETTVNAPRNLPKVLHKRTLGLSAMSTTKIETYFKDCVF) is mitochondrial targeting sequence.

This sequence belongs to the orthohepadnavirus protein X family. May form homodimer. May interact with host CEBPA, CFLAR, CREB1, DDB1, E4F1, HBXIP, HSPD1/HSP60, NFKBIA, POLR2E and SMAD4. Interacts with host SMC5-SMC6 complex and induces its degradation. Interacts with host TRPC4AP; leading to prevent ubiquitination of TRPC4AP. Interacts with host PLSCR1; this interaction promotes ubiquitination and degradation of HBx and impairs HBx-mediated cell proliferation. In terms of processing, a fraction may be phosphorylated in insect cells and HepG2 cells, a human hepatoblastoma cell line. Phosphorylated in vitro by host protein kinase C or mitogen-activated protein kinase. N-acetylated in insect cells.

The protein resides in the host cytoplasm. It is found in the host nucleus. Its subcellular location is the host mitochondrion. Its function is as follows. Multifunctional protein that plays a role in silencing host antiviral defenses and promoting viral transcription. Does not seem to be essential for HBV infection. May be directly involved in development of cirrhosis and liver cancer (hepatocellular carcinoma). Most of cytosolic activities involve modulation of cytosolic calcium. The effect on apoptosis is controversial depending on the cell types in which the studies have been conducted. May induce apoptosis by localizing in mitochondria and causing loss of mitochondrial membrane potential. May also modulate apoptosis by binding host CFLAR, a key regulator of the death-inducing signaling complex (DISC). Promotes viral transcription by using the host E3 ubiquitin ligase DDB1 to target the SMC5-SMC6 complex to proteasomal degradation. This host complex would otherwise bind to viral episomal DNA, and prevents its transcription. Moderately stimulates transcription of many different viral and cellular transcription elements. Promoters and enhancers stimulated by HBx contain DNA binding sites for NF-kappa-B, AP-1, AP-2, c-EBP, ATF/CREB, or the calcium-activated factor NF-AT. The polypeptide is Protein X (Chimpanzee hepatitis B virus (isolate United Kingdom/LSH/1988) (HBVcpz)).